The chain runs to 259 residues: Putative zinc metalloprotease Rip2 (259 aa).

2 helical membrane passes run 14–34 and 39–59; these read PIFLGLLGLTAVGGALAWLAG and PLAYAGVFVMVIAGWLVSLCL. Position 60 (His60) interacts with Zn(2+). Glu61 is a catalytic residue. Residue His64 participates in Zn(2+) binding. A run of 4 helical transmembrane segments spans residues 97–117, 128–148, 156–176, and 215–235; these read GLPMLFIALGGIGLPGAAVYV, TLVSLAGPTVNLALAMLLLAA, IHAVLWAGVAFLAFLQLTALV, and LVLFLAPTLNGWFFGVVYWLF.

This sequence belongs to the peptidase M50B family. Requires Zn(2+) as cofactor.

The protein resides in the cell membrane. This chain is Putative zinc metalloprotease Rip2 (rip2), found in Mycobacterium tuberculosis (strain ATCC 35801 / TMC 107 / Erdman).